A 259-amino-acid chain; its full sequence is uncharacterized protein (259 aa).

This is an uncharacterized protein from Schizosaccharomyces pombe (strain 972 / ATCC 24843) (Fission yeast).